We begin with the raw amino-acid sequence, 282 residues long: D-alanine aminotransferase (282 aa).

Tyr32 contacts substrate. Arg51 serves as a coordination point for pyridoxal 5'-phosphate. Positions 99 and 101 each coordinate substrate. Lys146 functions as the Proton acceptor in the catalytic mechanism. The residue at position 146 (Lys146) is an N6-(pyridoxal phosphate)lysine. A pyridoxal 5'-phosphate-binding site is contributed by Glu178.

It belongs to the class-IV pyridoxal-phosphate-dependent aminotransferase family. Homodimer. Requires pyridoxal 5'-phosphate as cofactor.

The catalysed reaction is D-alanine + 2-oxoglutarate = D-glutamate + pyruvate. Acts on the D-isomers of alanine, leucine, aspartate, glutamate, aminobutyrate, norvaline and asparagine. The enzyme transfers an amino group from a substrate D-amino acid to the pyridoxal phosphate cofactor to form pyridoxamine and an alpha-keto acid in the first half-reaction. The second half-reaction is the reverse of the first, transferring the amino group from the pyridoxamine to a second alpha-keto acid to form the product D-amino acid via a ping-pong mechanism. This is an important process in the formation of D-alanine and D-glutamate, which are essential bacterial cell wall components. This chain is D-alanine aminotransferase (dat), found in Staphylococcus aureus (strain COL).